The following is a 322-amino-acid chain: N-acetyl-gamma-glutamyl-phosphate reductase (322 aa).

C132 is an active-site residue.

Belongs to the NAGSA dehydrogenase family. Type 1 subfamily.

It localises to the cytoplasm. It catalyses the reaction N-acetyl-L-glutamate 5-semialdehyde + phosphate + NADP(+) = N-acetyl-L-glutamyl 5-phosphate + NADPH + H(+). Its pathway is amino-acid biosynthesis; L-arginine biosynthesis; N(2)-acetyl-L-ornithine from L-glutamate: step 3/4. Catalyzes the NADPH-dependent reduction of N-acetyl-5-glutamyl phosphate to yield N-acetyl-L-glutamate 5-semialdehyde. The protein is N-acetyl-gamma-glutamyl-phosphate reductase of Phocaeicola vulgatus (strain ATCC 8482 / DSM 1447 / JCM 5826 / CCUG 4940 / NBRC 14291 / NCTC 11154) (Bacteroides vulgatus).